We begin with the raw amino-acid sequence, 557 residues long: Probable protein kinase UbiB (557 aa).

The Protein kinase domain occupies 121–509 (AFDTTPLASA…RKLQTRVVTA (389 aa)). Residues 127 to 135 (LASASIAQV) and K154 contribute to the ATP site. Catalysis depends on D289, which acts as the Proton acceptor. The next 2 helical transmembrane spans lie at 506 to 526 (VVTA…YGLH) and 535 to 555 (VPVW…IAWL).

It belongs to the ABC1 family. UbiB subfamily.

It localises to the cell inner membrane. Its pathway is cofactor biosynthesis; ubiquinone biosynthesis [regulation]. Its function is as follows. Is probably a protein kinase regulator of UbiI activity which is involved in aerobic coenzyme Q (ubiquinone) biosynthesis. The polypeptide is Probable protein kinase UbiB (Xanthomonas campestris pv. campestris (strain B100)).